A 378-amino-acid polypeptide reads, in one-letter code: Homeobox protein Meis3 (378 aa).

The tract at residues 24–57 is disordered; sequence FSEAAPSVPRAPGPYTPHRPPQLQAPGLDSDSLK. A compositionally biased stretch (pro residues) spans 32–43; it reads PRAPGPYTPHRP. Residues 99-182 form the MEIS N-terminal domain; sequence GGDVCSSDSF…PIDLVIEDRD (84 aa). The tract at residues 203–265 is disordered; that stretch reads NTTWIRDHED…DEDLDLERRR (63 aa). Residues 230–244 show a composition bias toward low complexity; sequence SQSGDNSSDQGDGLD. The segment at residues 265-327 is a DNA-binding region (homeobox; TALE-type); it reads RNKKRGIFPK…NARRRIVQPM (63 aa).

This sequence belongs to the TALE/MEIS homeobox family. Expressed at high levels in the brain. Significant expression also observed in the heart, spleen and lung. Expressed in pancreatic islets (beta-cells and non-beta-cells).

Its subcellular location is the nucleus. Its function is as follows. Transcriptional regulator which directly modulates PDPK1 expression, thus promoting survival of pancreatic beta-cells. Also regulates expression of NDFIP1, BNIP3, and CCNG1. This Mus musculus (Mouse) protein is Homeobox protein Meis3 (Meis3).